We begin with the raw amino-acid sequence, 183 residues long: Ribosome-recycling factor (183 aa).

Belongs to the RRF family.

Its subcellular location is the cytoplasm. Its function is as follows. Responsible for the release of ribosomes from messenger RNA at the termination of protein biosynthesis. May increase the efficiency of translation by recycling ribosomes from one round of translation to another. This is Ribosome-recycling factor from Christiangramia forsetii (strain DSM 17595 / CGMCC 1.15422 / KT0803) (Gramella forsetii).